Reading from the N-terminus, the 1300-residue chain is Histone-lysine N-methyltransferase Suv4-20 (1300 aa).

The segment at 1 to 136 (MVVGSNHTRR…GSGSVVSGLN (136 aa)) is disordered. Over residues 14 to 62 (GSRFTNSSSSSSTSGGPTASASSTTSVTSSLATNSTSTSTAAALLSSMS) the composition is skewed to low complexity. Positions 79-97 (QTNQQHHQVAHSQPHATHY) are enriched in polar residues. Residues 116–128 (GSGGGSAGSGSGS) are compositionally biased toward gly residues. The SET domain occupies 255-366 (EACYRYTLEE…VGEEITCFYG (112 aa)). Disordered stretches follow at residues 432–490 (SRAN…GKEA), 535–574 (QQHH…QQMA), 669–744 (HQSQ…SAGR), 756–856 (NNNI…TQGI), and 891–927 (ALGG…VEPL). Residues 435-451 (NSTNSTSNSNSNTNDST) are compositionally biased toward low complexity. Residues 452 to 462 (GPSETSSTNGL) are compositionally biased toward polar residues. Residues 536-557 (QHHHQHHFHHHHHHHHHHHNHG) show a composition bias toward basic residues. Residues 564–574 (AEATAAVQQMA) show a composition bias toward low complexity. Composition is skewed to basic and acidic residues over residues 677–688 (RRSERQKEKLTD), 698–707 (QQKKEQKQQD), and 722–735 (QPEK…EQQK). Positions 756-821 (NNNIATTTNS…SSIPSSTSSE (66 aa)) are enriched in low complexity. Composition is skewed to polar residues over residues 822 to 834 (NQQQ…SCSP) and 911 to 923 (EPTT…TISN). Phosphoserine occurs at positions 831 and 833. Position 930 is a phosphothreonine (Thr-930). Disordered stretches follow at residues 956 to 988 (SLSN…NLTG), 1006 to 1188 (EHGN…PNGK), 1212 to 1233 (SPGQ…GGSG), and 1263 to 1300 (QISQ…HGQK). Positions 1009 to 1029 (NDDDEDEEEDDEEPAAEEEEE) are enriched in acidic residues. A compositionally biased stretch (basic residues) spans 1041 to 1055 (KKQRKKQRSRSRSSQ). Composition is skewed to low complexity over residues 1117–1145 (ASST…STSA) and 1161–1178 (SPSS…TSTT). Positions 1289-1300 (SHHHTNNHHGQK) are enriched in basic residues.

This sequence belongs to the class V-like SAM-binding methyltransferase superfamily. Histone-lysine methyltransferase family. Suvar4-20 subfamily.

It is found in the nucleus. The protein resides in the chromosome. It carries out the reaction L-lysyl(20)-[histone H4] + S-adenosyl-L-methionine = N(6)-methyl-L-lysyl(20)-[histone H4] + S-adenosyl-L-homocysteine + H(+). It catalyses the reaction N(6)-methyl-L-lysyl(20)-[histone H4] + S-adenosyl-L-methionine = N(6),N(6)-dimethyl-L-lysyl(20)-[histone H4] + S-adenosyl-L-homocysteine + H(+). The enzyme catalyses N(6),N(6)-dimethyl-L-lysyl(20)-[histone H4] + S-adenosyl-L-methionine = N(6),N(6),N(6)-trimethyl-L-lysyl(20)-[histone H4] + S-adenosyl-L-homocysteine + H(+). In terms of biological role, histone methyltransferase that specifically trimethylates 'Lys-20' of histone H4. H4 'Lys-20' trimethylation represents a specific tag for epigenetic transcriptional repression. Mainly functions in pericentric heterochromatin regions, thereby playing a central role in the establishment of constitutive heterochromatin in these regions. Acts as a dominant suppressor of position-effect variegation. The polypeptide is Histone-lysine N-methyltransferase Suv4-20 (Hmt4-20) (Drosophila melanogaster (Fruit fly)).